Consider the following 704-residue polypeptide: MTEIGREPKKKSKGNRAIRMNLFFLAVFVLFTALIFKLGVVQIVEGEQHEEDAEKSNAKTAYYPAPRGKMYDRNQKVAVDNQSVPEIVYVSTSSTKTEDKIKTAKRLASFIHIDTEFLKERDLRDYWIAAHPKKAAALLKESESNLKGDQAYKLQIERVPDQELKAIQQDDEEMETAAIYTRFSSGNAYEPQIVKAMNPNKSNSNGKNGALLDEKKNSSQRPKNDLTYDEISIVSEHLEELPGIDIVNDWTRKYPYDKTLYSVFGGVTTPDQGLLSDRKDFYLTRGYANNDRVGKSYLEYQYEEYLNSHKEKVEYVEDNKGNVVSQKTIDKGSRGYDLQLSFDMELQAKVEKIIEEEVRNSRARGNYMLDRAFAVMMDPNNGDILSMAGKKIDLKTNKIEDYAIGAFTTQYEMGSAVKGATVLAGYQDGIPHYKYYIDAPMLLGTNLIKKSYTNMGTINELTALQKSSNVYMFNVAMHIAGVTYKPHGSLPADQNDLLKMRNYYSQFGLGVKTGIDLPQESAGMQTTPKTVGGLILDLAIGQYDTYTPLQMAQYISVIANGGYRVQPRIVTSIHKPGKKDQLGKAIEHRKPKVLNKINNSESDLKQVQTGMKLVTSSGTAKNTFTEDVSGKTGTAETFYYGTNRNWWGKKTYNLTFVGYYPSKKPKVAFSVVVPSVDDDDKINKIIAKRAIHAYAELEKKHSKK.

The helical transmembrane segment at 23–43 (FFLAVFVLFTALIFKLGVVQI) threads the bilayer. The tract at residues 197–223 (MNPNKSNSNGKNGALLDEKKNSSQRPK) is disordered. A compositionally biased stretch (low complexity) spans 200–209 (NKSNSNGKNG). Over residues 212 to 223 (LDEKKNSSQRPK) the composition is skewed to basic and acidic residues. Serine 415 (acyl-ester intermediate) is an active-site residue.

It belongs to the transpeptidase family.

The protein localises to the cell membrane. The catalysed reaction is Preferential cleavage: (Ac)2-L-Lys-D-Ala-|-D-Ala. Also transpeptidation of peptidyl-alanyl moieties that are N-acyl substituents of D-alanine.. Its pathway is cell wall biogenesis; peptidoglycan biosynthesis. Involved in the polymerization of peptidoglycan. Plays a redundant role with PBP-2A (pbpA) in determining the rod shape of the cell during vegetative growth and spore outgrowth. The chain is Penicillin-binding protein H from Bacillus subtilis (strain 168).